The chain runs to 728 residues: 1,4-alpha-glucan branching enzyme GlgB (728 aa).

The Nucleophile role is filled by Asp-405. The Proton donor role is filled by Glu-458.

The protein belongs to the glycosyl hydrolase 13 family. GlgB subfamily. Monomer.

The catalysed reaction is Transfers a segment of a (1-&gt;4)-alpha-D-glucan chain to a primary hydroxy group in a similar glucan chain.. It functions in the pathway glycan biosynthesis; glycogen biosynthesis. Its function is as follows. Catalyzes the formation of the alpha-1,6-glucosidic linkages in glycogen by scission of a 1,4-alpha-linked oligosaccharide from growing alpha-1,4-glucan chains and the subsequent attachment of the oligosaccharide to the alpha-1,6 position. The sequence is that of 1,4-alpha-glucan branching enzyme GlgB from Shigella dysenteriae serotype 1 (strain Sd197).